Here is a 416-residue protein sequence, read N- to C-terminus: LL-diaminopimelate aminotransferase (416 aa).

Tyr-15 and Gly-42 together coordinate substrate. Pyridoxal 5'-phosphate contacts are provided by residues Tyr-72, 108-109 (SK), Tyr-132, Asn-187, Tyr-218, and 246-248 (SFS). 3 residues coordinate substrate: Lys-109, Tyr-132, and Asn-187. Lys-249 is subject to N6-(pyridoxal phosphate)lysine. Residues Arg-257 and Asn-292 each coordinate pyridoxal 5'-phosphate. Substrate-binding residues include Asn-292 and Arg-388.

Belongs to the class-I pyridoxal-phosphate-dependent aminotransferase family. LL-diaminopimelate aminotransferase subfamily. In terms of assembly, homodimer. Pyridoxal 5'-phosphate serves as cofactor.

It catalyses the reaction (2S,6S)-2,6-diaminopimelate + 2-oxoglutarate = (S)-2,3,4,5-tetrahydrodipicolinate + L-glutamate + H2O + H(+). Its pathway is amino-acid biosynthesis; L-lysine biosynthesis via DAP pathway; LL-2,6-diaminopimelate from (S)-tetrahydrodipicolinate (aminotransferase route): step 1/1. Functionally, involved in the synthesis of meso-diaminopimelate (m-DAP or DL-DAP), required for both lysine and peptidoglycan biosynthesis. Catalyzes the direct conversion of tetrahydrodipicolinate to LL-diaminopimelate. The protein is LL-diaminopimelate aminotransferase of Synechococcus sp. (strain JA-2-3B'a(2-13)) (Cyanobacteria bacterium Yellowstone B-Prime).